The chain runs to 559 residues: Cytoplasmic polyadenylation element-binding protein 1 (559 aa).

Positions 223–244 are disordered; it reads RLDHSSSPLTPPPSATSSGGLS. RRM domains lie at 304–401 and 423–504; these read CKVF…DAQV and NTVF…PYLE. 8 residues coordinate Zn(2+): cysteine 508, cysteine 511, cysteine 520, cysteine 525, cysteine 530, cysteine 533, histidine 538, and histidine 546.

It belongs to the RRM CPEB family. In terms of assembly, interacts with kinesin, dynein, APLP1, APLP2, TENT2/GLD2 and APP. Both phosphorylated and non phosphorylated forms interact with APLP1. Interacts with TENT4B; the interaction is required for TENT4B-mediated translational control.

The protein localises to the cytoplasm. In terms of biological role, sequence-specific RNA-binding protein that regulates mRNA cytoplasmic polyadenylation and translation initiation during oocyte maturation and early development. Binds to the cytoplasmic polyadenylation element (CPE), an uridine-rich sequence element (consensus sequence 5'-UUUUUAU-3') within the mRNA 3'-UTR. The sequence is that of Cytoplasmic polyadenylation element-binding protein 1 (cpeb1) from Carassius auratus (Goldfish).